Reading from the N-terminus, the 520-residue chain is Sodium-dependent dicarboxylate transporter SdcS (520 aa).

14 consecutive transmembrane segments (helical) span residues Thr30–Phe50, Leu55–Thr75, Ala77–Leu97, Ser104–Met124, Ser160–Ile180, Ile207–Ile227, Phe242–Leu262, Lys298–Leu318, Val323–Ile343, Glu362–Ser382, Gly399–Val419, Met428–Met448, Ala452–Phe472, and Leu491–Ile511.

Belongs to the SLC13A/DASS transporter (TC 2.A.47) family. NADC subfamily.

It localises to the cell membrane. Its function is as follows. Mediates the transport of the dicarboxylates fumarate, malate, and succinate across the cytoplasmic membrane via a Na(+)-electrochemical gradient. The polypeptide is Sodium-dependent dicarboxylate transporter SdcS (sdcS) (Staphylococcus aureus (strain MRSA252)).